We begin with the raw amino-acid sequence, 3210 residues long: PF 1022-synthetase (3210 aa).

The tract at residues 68–454 is condensation 1; that stretch reads VDDRRHAIGH…VKELDVVTAE (387 aa). Residues 483 to 876 are adenylation 1; sequence AGDPNKAAVF…GRKDSQVKIR (394 aa). Residues 1010 to 1086 enclose the Carrier 1 domain; that stretch reads APATGIEVKL…GLVDVIGRDP (77 aa). Serine 1047 is modified (O-(pantetheine 4'-phosphoryl)serine). Residues 1104–1534 are condensation 2; that stretch reads SFAQGRLWFL…RTPIAVLPLT (431 aa). The segment at 1563-2023 is adenylation 2; sequence FRKQVAAHPH…GRMDQQVKIR (461 aa). Positions 2081-2236 are S-adenosyl-L-methionine-dependent N-methyltransferase; it reads EGWKDFFESN…YLLEVVESLV (156 aa). Carrier domains are found at residues 2570–2644 and 2668–2742; these read DPFV…RQGL and TPSD…RLTQ. Serine 2604 and serine 2702 each carry O-(pantetheine 4'-phosphoryl)serine. The condensation 3 stretch occupies residues 2788–3203; it reads LDVYPATQMQ…KRMLEELCGN (416 aa). The disordered stretch occupies residues 2976-3002; the sequence is VIKGNNNTTPPPPPQQQSTPSGAHHAS.

Belongs to the NRP synthetase family. Pantetheine 4'-phosphate serves as cofactor.

The catalysed reaction is 2 (R)-3-phenyllactate + 2 (R)-lactate + 4 L-leucine + 4 S-adenosyl-L-methionine + 8 ATP = PF1022A + 8 AMP + 4 S-adenosyl-L-homocysteine + 8 diphosphate + 8 H(+). It catalyses the reaction 4 (R)-3-phenyllactate + 4 L-leucine + 4 S-adenosyl-L-methionine + 8 ATP = PF1022B + 8 AMP + 4 S-adenosyl-L-homocysteine + 8 diphosphate + 8 H(+). It carries out the reaction 3 (R)-3-phenyllactate + (R)-lactate + 4 L-leucine + 4 S-adenosyl-L-methionine + 8 ATP = PF1022C + 8 AMP + 4 S-adenosyl-L-homocysteine + 8 diphosphate + 8 H(+). The enzyme catalyses (R)-3-phenyllactate + 3 (R)-lactate + 4 L-leucine + 4 S-adenosyl-L-methionine + 8 ATP = PF1022D + 8 AMP + 4 S-adenosyl-L-homocysteine + 8 diphosphate + 8 H(+). The catalysed reaction is 4 (R)-lactate + 4 L-leucine + 4 S-adenosyl-L-methionine + 8 ATP = PF1022F + 8 AMP + 4 S-adenosyl-L-homocysteine + 8 diphosphate + 8 H(+). In terms of biological role, nonribosomal peptide synthetase that synthesizes cyclooctadepsipeptides (CODPs) PF 1022 that show powerful broad-spectrum anthelmintic activity with low toxicity in animals. Couples 4 N-methyl-L-leucines and a varying content of alpha-D-hydroxy acids (D-lactates or D-phenyllactates) in an alternative fashion. The enzyme is capable of synthesizing all known natural cyclooctadepsipeptides of the PF1022 type differing in the content of D-lactate and D-phenyllactate, using from 4 D-lactates (PF 1022F) to 4 D-phenyllactates (PF 1022B), respectively. The formation of different PF-related compounds is mainly controlled by the molar ratio of the hydroxy acids. N-methylation of the substrate L-leucine takes place after covalent binding prior to peptide bond formation. In Rosellinia sp. (Mycelia sterilia), this protein is PF 1022-synthetase.